A 192-amino-acid chain; its full sequence is Small ribosomal subunit protein uS4c-2 (192 aa).

The S4 RNA-binding domain maps to 91-155 (TRLDHLVYRA…PKPPEYLPPY (65 aa)).

This sequence belongs to the universal ribosomal protein uS4 family. In terms of assembly, part of the 30S ribosomal subunit. Contacts protein S5. The interaction surface between S4 and S5 is involved in control of translational fidelity.

It localises to the plastid. Its subcellular location is the chloroplast. One of the primary rRNA binding proteins, it binds directly to 16S rRNA where it nucleates assembly of the body of the 30S subunit. Functionally, with S5 and S12 plays an important role in translational accuracy. The protein is Small ribosomal subunit protein uS4c-2 of Cyanidium caldarium (Red alga).